A 197-amino-acid chain; its full sequence is Potassium-transporting ATPase KdpC subunit (197 aa).

The helical transmembrane segment at 7-27 (PAFISLILFTLLFGLIYPLTV) threads the bilayer.

Belongs to the KdpC family. In terms of assembly, the system is composed of three essential subunits: KdpA, KdpB and KdpC.

The protein localises to the cell inner membrane. In terms of biological role, part of the high-affinity ATP-driven potassium transport (or Kdp) system, which catalyzes the hydrolysis of ATP coupled with the electrogenic transport of potassium into the cytoplasm. This subunit acts as a catalytic chaperone that increases the ATP-binding affinity of the ATP-hydrolyzing subunit KdpB by the formation of a transient KdpB/KdpC/ATP ternary complex. The chain is Potassium-transporting ATPase KdpC subunit from Beijerinckia indica subsp. indica (strain ATCC 9039 / DSM 1715 / NCIMB 8712).